The sequence spans 85 residues: Putative membrane protein insertion efficiency factor (85 aa).

This sequence belongs to the UPF0161 family.

Its subcellular location is the cell inner membrane. Functionally, could be involved in insertion of integral membrane proteins into the membrane. This Shewanella sediminis (strain HAW-EB3) protein is Putative membrane protein insertion efficiency factor.